Here is a 167-residue protein sequence, read N- to C-terminus: NAD(P)H-quinone oxidoreductase subunit I, chloroplastic (167 aa).

4Fe-4S ferredoxin-type domains are found at residues 55 to 84 and 95 to 124; these read GRIHFEFDKCIACEVCVRVCPIDLPVVDWK and LNYSIDFGICIFCGNCVEYCPTNCLSMTEE. [4Fe-4S] cluster is bound by residues Cys-64, Cys-67, Cys-70, Cys-74, Cys-104, Cys-107, Cys-110, and Cys-114.

This sequence belongs to the complex I 23 kDa subunit family. NDH is composed of at least 16 different subunits, 5 of which are encoded in the nucleus. It depends on [4Fe-4S] cluster as a cofactor.

Its subcellular location is the plastid. It localises to the chloroplast thylakoid membrane. It catalyses the reaction a plastoquinone + NADH + (n+1) H(+)(in) = a plastoquinol + NAD(+) + n H(+)(out). It carries out the reaction a plastoquinone + NADPH + (n+1) H(+)(in) = a plastoquinol + NADP(+) + n H(+)(out). Functionally, NDH shuttles electrons from NAD(P)H:plastoquinone, via FMN and iron-sulfur (Fe-S) centers, to quinones in the photosynthetic chain and possibly in a chloroplast respiratory chain. The immediate electron acceptor for the enzyme in this species is believed to be plastoquinone. Couples the redox reaction to proton translocation, and thus conserves the redox energy in a proton gradient. In Pelargonium hortorum (Common geranium), this protein is NAD(P)H-quinone oxidoreductase subunit I, chloroplastic.